The sequence spans 1575 residues: Lysophospholipase NTE1 (1575 aa).

The tract at residues M1–N56 is disordered. Residues M1–G99 lie on the Cytoplasmic side of the membrane. Residues L19–S48 show a composition bias toward low complexity. The helical transmembrane segment at I100 to V120 threads the bilayer. The Lumenal portion of the chain corresponds to V121–T151. The chain crosses the membrane as a helical span at residues M152 to I172. Residues R173–I1575 lie on the Cytoplasmic side of the membrane. 2 disordered regions span residues D339 to V425 and G568 to G587. The span at R409–S424 shows a compositional bias: basic residues. A nucleoside 3',5'-cyclic phosphate contacts are provided by residues G737–R856 and R894–R1014. In terms of domain architecture, PNPLA spans L1272–K1436. The short motif at G1276 to G1281 is the GXGXXG element. The GXSXG motif lies at G1303 to G1307. The Nucleophile role is filled by S1305. The active-site Proton acceptor is the D1423. Residues D1423–G1425 carry the DGA/G motif.

The protein belongs to the NTE family.

It localises to the endoplasmic reticulum membrane. It catalyses the reaction a 1-acyl-sn-glycero-3-phosphocholine + H2O = sn-glycerol 3-phosphocholine + a fatty acid + H(+). Inhibited by organophosphorus esters. Its function is as follows. Intracellular phospholipase B that catalyzes the double deacylation of phosphatidylcholine (PC) to glycerophosphocholine (GroPCho). Plays an important role in membrane lipid homeostasis. Responsible for the rapid PC turnover in response to inositol, elevated temperatures, or when choline is present in the growth medium. The sequence is that of Lysophospholipase NTE1 (NTE1) from Coccidioides immitis (strain RS) (Valley fever fungus).